A 262-amino-acid chain; its full sequence is MAVGKNKRVSKGKKGAKKKVIDPFSRKEWYNLKAPVTFNVRNFGQTLVTKTVGTKLATDGLKGRVFEMSLADLNADEDQAYRKIKLSCEDVQGRNCLTDFHGTSVTRDKLCSLIRKNYSLIEAFADVKTLDGYNLRLFCVGYTKRRPGQLKSTCYVRTSKVRLIHKKMVSVMTNEASNSTLKELVKKVIPESIGKEIEKACKSIFPLQNVLVRKIKVLKKPKFDLTKLMESHNYSGDEEGRTLKVKESENATNLLTAELQSS.

This sequence belongs to the eukaryotic ribosomal protein eS1 family. Component of the small ribosomal subunit. Mature ribosomes consist of a small (40S) and a large (60S) subunit. The 40S subunit contains about 33 different proteins and 1 molecule of RNA (18S). The 60S subunit contains about 49 different proteins and 3 molecules of RNA (25S, 5.8S and 5S).

The protein resides in the cytoplasm. The protein is Small ribosomal subunit protein eS1 of Theileria parva (East coast fever infection agent).